The sequence spans 470 residues: MNPNQKIITIGSISIAIGIISLILQIGNIISIWASHSIQTGSQNHTGICNQRIITYENSTWVNQTYVNINNTNVVAGKDKTSMTLAGNSSLCPIRGWAIYTKDNSIRIGSKGDVFVIREPFISCSHLECRTFFLTQGALLNDKHSNGTVKDRSPYRALMSCPLGEAPSPYNSRFESVAWSASACHDGLGWLTIGISGPDNGAVAVLKYNGIITETIKSWKKRILRTQESECVCMNGSCFTIMTDGPSNGAASYRIFKIEKGRVTKSIELDAPNYHYEECSCYPDTGTVMCVCRDNWHGSNRPWVSFNQNLDYQIGYICSGVFGDNPRPKDGEGSCNPVTVDGADGVKGFSYRYGNGVWIGRTKSNRLRKGFEMIWDPNGWTDTDSDFSMKQDIVAMTDWSGYSGSFVQHPELTGLDCMRPCFWVELVRGLPRENTTIWTSGSSISFCGVNSDTANWSWPDGAELPFTIDK.

The Intravirion segment spans residues 1–6 (MNPNQK). The helical transmembrane segment at 7–27 (IITIGSISIAIGIISLILQIG) threads the bilayer. Residues 11 to 33 (GSISIAIGIISLILQIGNIISIW) form an involved in apical transport and lipid raft association region. Over 28–470 (NIISIWASHS…GAELPFTIDK (443 aa)) the chain is Virion surface. Residues 36-90 (HSIQTGSQNHTGICNQRIITYENSTWVNQTYVNINNTNVVAGKDKTSMTLAGNSS) form a hypervariable stalk region region. N44, N58, N63, N70, and N88 each carry an N-linked (GlcNAc...) asparagine; by host glycan. The interval 91–470 (LCPIRGWAIY…GAELPFTIDK (380 aa)) is head of neuraminidase. 8 cysteine pairs are disulfide-bonded: C92–C417, C124–C129, C184–C231, C233–C238, C279–C292, C281–C290, C318–C335, and C421–C447. R118 provides a ligand contact to substrate. Residue N146 is glycosylated (N-linked (GlcNAc...) asparagine; by host). The active-site Proton donor/acceptor is the D151. R152 lines the substrate pocket. N-linked (GlcNAc...) asparagine; by host glycosylation is present at N235. A substrate-binding site is contributed by 277–278 (EE). Position 293 (R293) interacts with substrate. Ca(2+)-binding residues include D294, G298, and D324. R368 contributes to the substrate binding site. Y402 (nucleophile) is an active-site residue. N-linked (GlcNAc...) asparagine; by host glycans are attached at residues N434 and N455.

Belongs to the glycosyl hydrolase 34 family. Homotetramer. The cofactor is Ca(2+). N-glycosylated.

It localises to the virion membrane. Its subcellular location is the host apical cell membrane. The catalysed reaction is Hydrolysis of alpha-(2-&gt;3)-, alpha-(2-&gt;6)-, alpha-(2-&gt;8)- glycosidic linkages of terminal sialic acid residues in oligosaccharides, glycoproteins, glycolipids, colominic acid and synthetic substrates.. With respect to regulation, inhibited by the neuraminidase inhibitors zanamivir (Relenza) and oseltamivir (Tamiflu). These drugs interfere with the release of progeny virus from infected cells and are effective against all influenza strains. Resistance to neuraminidase inhibitors is quite rare. In terms of biological role, catalyzes the removal of terminal sialic acid residues from viral and cellular glycoconjugates. Cleaves off the terminal sialic acids on the glycosylated HA during virus budding to facilitate virus release. Additionally helps virus spread through the circulation by further removing sialic acids from the cell surface. These cleavages prevent self-aggregation and ensure the efficient spread of the progeny virus from cell to cell. Otherwise, infection would be limited to one round of replication. Described as a receptor-destroying enzyme because it cleaves a terminal sialic acid from the cellular receptors. May facilitate viral invasion of the upper airways by cleaving the sialic acid moieties on the mucin of the airway epithelial cells. Likely to plays a role in the budding process through its association with lipid rafts during intracellular transport. May additionally display a raft-association independent effect on budding. Plays a role in the determination of host range restriction on replication and virulence. Sialidase activity in late endosome/lysosome traffic seems to enhance virus replication. This Influenza A virus (strain A/USA:Memphis/10/1996 H1N1) protein is Neuraminidase.